A 130-amino-acid polypeptide reads, in one-letter code: Large ribosomal subunit protein bL21 (130 aa).

It belongs to the bacterial ribosomal protein bL21 family. In terms of assembly, part of the 50S ribosomal subunit. Contacts protein L20.

This protein binds to 23S rRNA in the presence of protein L20. The polypeptide is Large ribosomal subunit protein bL21 (Trichormus variabilis (strain ATCC 29413 / PCC 7937) (Anabaena variabilis)).